The chain runs to 191 residues: UPF0312 protein Sputw3181_1309 (191 aa).

Positions Met1–Ala22 are cleaved as a signal peptide.

The protein belongs to the UPF0312 family. Type 1 subfamily.

Its subcellular location is the periplasm. The chain is UPF0312 protein Sputw3181_1309 from Shewanella sp. (strain W3-18-1).